A 102-amino-acid polypeptide reads, in one-letter code: MYAVVKTGGKQYKVSVGEKLKVEQIPAELDSQIELTEVLMIADGESVKVGAPFIEGAKVTAKVVAHGRGEKVRIFKMRRRKHYQKRQGHRQNFTQIEIVAIA.

The protein belongs to the bacterial ribosomal protein bL21 family. As to quaternary structure, part of the 50S ribosomal subunit. Contacts protein L20.

In terms of biological role, this protein binds to 23S rRNA in the presence of protein L20. This is Large ribosomal subunit protein bL21 from Neisseria meningitidis serogroup A / serotype 4A (strain DSM 15465 / Z2491).